Consider the following 500-residue polypeptide: Cytochrome c-552 (500 aa).

Positions 1–24 (MKFLIKSLAVATISILGCLQTALA) are cleaved as a signal peptide. Positions 102, 130, 133, 134, 168, 171, 172, 217, 220, and 221 each coordinate heme c. Ca(2+) contacts are provided by E223, Y224, K268, and Q270. Y224 contacts substrate. H271 is a binding site for substrate. Heme c contacts are provided by H282, C289, C292, H293, H308, C321, C324, H325, and H400. The interval 477–500 (ARAKGLLPAEEADKPVAAPKAEAK) is disordered.

This sequence belongs to the cytochrome c-552 family. Requires Ca(2+) as cofactor. It depends on heme c as a cofactor.

It localises to the periplasm. The enzyme catalyses 6 Fe(III)-[cytochrome c] + NH4(+) + 2 H2O = 6 Fe(II)-[cytochrome c] + nitrite + 8 H(+). It participates in nitrogen metabolism; nitrate reduction (assimilation). Functionally, catalyzes the reduction of nitrite to ammonia, consuming six electrons in the process. The protein is Cytochrome c-552 of Mannheimia haemolytica (Pasteurella haemolytica).